The sequence spans 338 residues: Ketol-acid reductoisomerase (NADP(+)) (338 aa).

The 181-residue stretch at 1 to 181 folds into the KARI N-terminal Rossmann domain; it reads MKVFYDKDCD…GGGRAGIIET (181 aa). NADP(+) is bound by residues 24 to 27, arginine 47, and serine 52; that span reads YGSQ. The active site involves histidine 107. Residue glycine 133 coordinates NADP(+). Residues 182-327 form the KARI C-terminal knotted domain; sequence NFREETETDL…GKLRAMMPWI (146 aa). Mg(2+) contacts are provided by aspartate 190, glutamate 194, glutamate 226, and glutamate 230. A substrate-binding site is contributed by serine 251.

Belongs to the ketol-acid reductoisomerase family. Mg(2+) serves as cofactor.

The enzyme catalyses (2R)-2,3-dihydroxy-3-methylbutanoate + NADP(+) = (2S)-2-acetolactate + NADPH + H(+). It catalyses the reaction (2R,3R)-2,3-dihydroxy-3-methylpentanoate + NADP(+) = (S)-2-ethyl-2-hydroxy-3-oxobutanoate + NADPH + H(+). The protein operates within amino-acid biosynthesis; L-isoleucine biosynthesis; L-isoleucine from 2-oxobutanoate: step 2/4. Its pathway is amino-acid biosynthesis; L-valine biosynthesis; L-valine from pyruvate: step 2/4. Functionally, involved in the biosynthesis of branched-chain amino acids (BCAA). Catalyzes an alkyl-migration followed by a ketol-acid reduction of (S)-2-acetolactate (S2AL) to yield (R)-2,3-dihydroxy-isovalerate. In the isomerase reaction, S2AL is rearranged via a Mg-dependent methyl migration to produce 3-hydroxy-3-methyl-2-ketobutyrate (HMKB). In the reductase reaction, this 2-ketoacid undergoes a metal-dependent reduction by NADPH to yield (R)-2,3-dihydroxy-isovalerate. In Bordetella pertussis (strain Tohama I / ATCC BAA-589 / NCTC 13251), this protein is Ketol-acid reductoisomerase (NADP(+)).